A 382-amino-acid polypeptide reads, in one-letter code: F-box/kelch-repeat protein KIB1 (382 aa).

Residues 22–69 form the F-box domain; that stretch reads SKHSILAVDLVRLILERLSFVDFHRARCVSSIWYIASKTVIGVTNPTT. Kelch repeat units follow at residues 73-117, 159-209, and 259-306; these read ILFP…ASSG, VLWV…FKEN, and IVAK…ITVE.

As to quaternary structure, part of a SCF (SKP1-cullin-F-box) protein ligase complex. Binds directly to several GSK3 family proteins such as SKP1A/ASK1, ASK1/SK11, ASK3/SK12, ASK5/SK13, ASK7/BIN2/SK21, ASK9/SK22 and ASK6/SK23. Interacts with ASK7/BIN2/SK21 in a brassinosteroid (BR)-dependent manner. Expressed in seedlings, leaves, stems, flower buds and flowers.

Its subcellular location is the cytoplasm. It localises to the nucleus. The protein resides in the nucleolus. Its function is as follows. Component of SCF(ASK-cullin-F-box) E3 ubiquitin ligase complexes, which may mediate the ubiquitination and subsequent proteasomal degradation of target proteins. Required for brassinosteroid (BR) signal transduction. Mediates ASK7/BIN2/SK21 inactivation both by competing with substrate binding (e.g. BZR1) and by promoting its ubiquitination and subsequent proteasomal degradation. In Arabidopsis thaliana (Mouse-ear cress), this protein is F-box/kelch-repeat protein KIB1.